We begin with the raw amino-acid sequence, 137 residues long: Cellular retinoic acid-binding protein 1 (137 aa).

The Nuclear localization signal motif lies at 21 to 31 (KALGVNTMLRK). 132 to 134 (RIY) contacts all-trans-retinoate.

The protein belongs to the calycin superfamily. Fatty-acid binding protein (FABP) family.

The protein resides in the cytoplasm. Cytosolic CRABPs may regulate the access of retinoic acid to the nuclear retinoic acid receptors. In Takifugu rubripes (Japanese pufferfish), this protein is Cellular retinoic acid-binding protein 1 (crabp1).